The following is a 269-amino-acid chain: Regulatory protein RecX (269 aa).

This sequence belongs to the RecX family.

The protein localises to the cytoplasm. Modulates RecA activity. The sequence is that of Regulatory protein RecX from Geobacillus thermodenitrificans (strain NG80-2).